Here is a 188-residue protein sequence, read N- to C-terminus: Gag polyprotein (188 aa).

The span at 77 to 90 (VGETTVQRDAKMAP) shows a compositional bias: basic and acidic residues. The disordered stretch occupies residues 77–99 (VGETTVQRDAKMAPEETATPKTV). Positions 121–124 (PPPY) match the PPXY motif motif. Positions 130-166 (YPSLAGVGEQQGQGGDTPRGAEQPRAEPGHAGLAPGP) are disordered.

Specific enzymatic cleavages in vivo yield mature proteins.

Its subcellular location is the virion. This chain is Gag polyprotein (ev-2), found in Galliformes (EV-2).